The sequence spans 341 residues: tRNA N6-adenosine threonylcarbamoyltransferase (341 aa).

2 residues coordinate Fe cation: H111 and H115. Substrate-binding positions include 134 to 138, D167, G180, and N276; that span reads LVSGG. Position 304 (D304) interacts with Fe cation.

This sequence belongs to the KAE1 / TsaD family. The cofactor is Fe(2+).

It is found in the cytoplasm. The catalysed reaction is L-threonylcarbamoyladenylate + adenosine(37) in tRNA = N(6)-L-threonylcarbamoyladenosine(37) in tRNA + AMP + H(+). In terms of biological role, required for the formation of a threonylcarbamoyl group on adenosine at position 37 (t(6)A37) in tRNAs that read codons beginning with adenine. Is involved in the transfer of the threonylcarbamoyl moiety of threonylcarbamoyl-AMP (TC-AMP) to the N6 group of A37, together with TsaE and TsaB. TsaD likely plays a direct catalytic role in this reaction. This Ectopseudomonas mendocina (strain ymp) (Pseudomonas mendocina) protein is tRNA N6-adenosine threonylcarbamoyltransferase.